Reading from the N-terminus, the 511-residue chain is Exodeoxyribonuclease 7 large subunit (511 aa).

Belongs to the XseA family. In terms of assembly, heterooligomer composed of large and small subunits.

The protein resides in the cytoplasm. It carries out the reaction Exonucleolytic cleavage in either 5'- to 3'- or 3'- to 5'-direction to yield nucleoside 5'-phosphates.. Functionally, bidirectionally degrades single-stranded DNA into large acid-insoluble oligonucleotides, which are then degraded further into small acid-soluble oligonucleotides. This Brucella melitensis biotype 1 (strain ATCC 23456 / CCUG 17765 / NCTC 10094 / 16M) protein is Exodeoxyribonuclease 7 large subunit.